The following is a 103-amino-acid chain: Nucleoid-associated protein BH0035 (103 aa).

A compositionally biased stretch (low complexity) spans 1-20 (MKNMGQMMKQMQKMQKQMMK). The tract at residues 1 to 29 (MKNMGQMMKQMQKMQKQMMKAQEELKEKT) is disordered.

Belongs to the YbaB/EbfC family. As to quaternary structure, homodimer.

The protein localises to the cytoplasm. It is found in the nucleoid. Binds to DNA and alters its conformation. May be involved in regulation of gene expression, nucleoid organization and DNA protection. The sequence is that of Nucleoid-associated protein BH0035 from Halalkalibacterium halodurans (strain ATCC BAA-125 / DSM 18197 / FERM 7344 / JCM 9153 / C-125) (Bacillus halodurans).